The primary structure comprises 226 residues: Ribonuclease 3 (226 aa).

The RNase III domain occupies 6-128; that stretch reads INRLQRKLGY…LIGAIFLDSD (123 aa). Glutamate 41 provides a ligand contact to Mg(2+). Aspartate 45 is a catalytic residue. Mg(2+)-binding residues include aspartate 114 and glutamate 117. Glutamate 117 is a catalytic residue. One can recognise a DRBM domain in the interval 155-225; that stretch reads DPKTRLQEYL…AEQALKQLEL (71 aa).

It belongs to the ribonuclease III family. In terms of assembly, homodimer. The cofactor is Mg(2+).

The protein resides in the cytoplasm. The catalysed reaction is Endonucleolytic cleavage to 5'-phosphomonoester.. In terms of biological role, digests double-stranded RNA. Involved in the processing of primary rRNA transcript to yield the immediate precursors to the large and small rRNAs (23S and 16S). Processes some mRNAs, and tRNAs when they are encoded in the rRNA operon. Processes pre-crRNA and tracrRNA of type II CRISPR loci if present in the organism. The protein is Ribonuclease 3 of Photorhabdus laumondii subsp. laumondii (strain DSM 15139 / CIP 105565 / TT01) (Photorhabdus luminescens subsp. laumondii).